We begin with the raw amino-acid sequence, 1209 residues long: MTVPKEIPEKWARAGAPPSWSQKKPSWGTEEERRARANDREYNEKFQYASNCIKTSKYNIVTFLPVNLFEQFQEVANTYFLFLLILQLIPQISSLSWFTTIVPLVLVLTITAVKDATDDYFRHKSDNQVNNRHSQVLINGVLQQEQWMNVCVGDIIKLENNQFVAADLLLLSSSEPHGLCYIETAELDGETNMKVRQAIPVTSELGDVSQLARFDGEVICEPPNNKLDKFSGTLYWKENKFPLSNQNMLLRGCVLRNTEWCFGLVIFAGPDTKLMQNSGRTKFKRTSIDRLMNTLVLWIFGFLVCMGVILAIGNAIWEHEVGTRFQVYLPWDEAVDSAFFSGFLSFWSYIIILNTVVPISLYVSVEVIRLGHSYFINWDKKMFCMKKRTPAEARTTTLNEELGQVEYIFSDKTGTLTQNIMVFNKCSINGHSYGDVFDVLGHKAELGERPEPVDFSFNPLADKKFLFWDSSLLEAVKMGDPHTHEFFRLLSLCHTVMSEEKNEGELYYKAQSPDEGALVTAARNFGFVFRSRTPKTITVHELGTAITYQLLAILDFNNIRKRMSVIVRNPEGKIRLYCKGADTILLDRLHPPTQELLSSTTDHLNEYAGDGLRTLVLAYKDLDEEYYEEWARRRLQASLAQDSREDRLASIYEEVESDMMLLGATAIEDKLQQGVPETIALLTLANIKIWVLTGDKQETAVNIGYSCKMLTDDMTEVFVVTGHTVLEVREELRKARKKMVDSSHAVGNGFTYQGNLSSSKLTSVLEAVAGEYALVINGHSLAHALEADMELEFLETACACKAVICCRVTPLQKAQVVELVKKYKKAVTLAIGDGANDVSMIKTAHIGVGISGQEGIQAVLASDYSFSQFKFLQRLLLVHGRWSYLRMCKFLCYFFYKNFAFTMVHFWFGFFCGFSAQTVYDQYFITLYNIVYTSLPVLAMGVFDQDVPEQRSMEYPKLYEPGQLNLLFNKREFFICIAQGIYTSVLMFFIPYGVFAEATRDDGTQLADYQSFAVTVATSLVIVVSVQIGLDTGYWTAINHFFIWGSLAVYFAILFAMHSNGLFDMFPNQFRFVGNAQNTLAQPTVWLTIALTTAVCIMPVVAFRFLRLSLKPDLSDTVRYTQLVRKKQKAQHRCMRRVGRTGSRRSGYAFSHQEGFGELIMSGKNMRLSSLALSSFSTRSSSSWIESLRRKKSDSANSPSGGAEKPLKG.

The Cytoplasmic segment spans residues 1–68; that stretch reads MTVPKEIPEK…NIVTFLPVNL (68 aa). Residues 12–36 form a disordered region; that stretch reads ARAGAPPSWSQKKPSWGTEEERRAR. Residues 69–89 form a helical membrane-spanning segment; that stretch reads FEQFQEVANTYFLFLLILQLI. Residues 90 to 91 lie on the Exoplasmic loop side of the membrane; that stretch reads PQ. Residues 92–112 traverse the membrane as a helical segment; it reads ISSLSWFTTIVPLVLVLTITA. Topologically, residues 113–295 are cytoplasmic; sequence VKDATDDYFR…TSIDRLMNTL (183 aa). Residues 296-316 form a helical membrane-spanning segment; that stretch reads VLWIFGFLVCMGVILAIGNAI. The Exoplasmic loop segment spans residues 317–338; it reads WEHEVGTRFQVYLPWDEAVDSA. The chain crosses the membrane as a helical span at residues 339–359; it reads FFSGFLSFWSYIIILNTVVPI. Residues 360–898 are Cytoplasmic-facing; that stretch reads SLYVSVEVIR…KFLCYFFYKN (539 aa). The active-site 4-aspartylphosphate intermediate is the Asp411. ATP is bound by residues Asp411, Lys412, Thr413, Glu515, Phe556, Lys579, Arg613, Thr693, Gly694, Asp695, Arg807, and Lys813. Asp411 contacts Mg(2+). Thr413 lines the Mg(2+) pocket. Asp833 contributes to the Mg(2+) binding site. 2 residues coordinate ATP: Asn836 and Asp837. Asp837 serves as a coordination point for Mg(2+). Residues 899 to 919 form a helical membrane-spanning segment; the sequence is FAFTMVHFWFGFFCGFSAQTV. Residues 920-922 are Exoplasmic loop-facing; sequence YDQ. Residues 923–943 form a helical membrane-spanning segment; the sequence is YFITLYNIVYTSLPVLAMGVF. Residues 944–972 are Cytoplasmic-facing; sequence DQDVPEQRSMEYPKLYEPGQLNLLFNKRE. A helical membrane pass occupies residues 973–993; it reads FFICIAQGIYTSVLMFFIPYG. At 994–1011 the chain is on the exoplasmic loop side; the sequence is VFAEATRDDGTQLADYQS. Residues 1012–1032 traverse the membrane as a helical segment; that stretch reads FAVTVATSLVIVVSVQIGLDT. Residues 1033–1036 lie on the Cytoplasmic side of the membrane; that stretch reads GYWT. The chain crosses the membrane as a helical span at residues 1037–1057; it reads AINHFFIWGSLAVYFAILFAM. Over 1058–1082 the chain is Exoplasmic loop; it reads HSNGLFDMFPNQFRFVGNAQNTLAQ. A helical transmembrane segment spans residues 1083 to 1103; sequence PTVWLTIALTTAVCIMPVVAF. Over 1104–1209 the chain is Cytoplasmic; it reads RFLRLSLKPD…SGGAEKPLKG (106 aa). Ser1175 bears the Phosphoserine mark. Positions 1179–1209 are disordered; it reads RSSSSWIESLRRKKSDSANSPSGGAEKPLKG.

Belongs to the cation transport ATPase (P-type) (TC 3.A.3) family. Type IV subfamily. As to quaternary structure, component of a P4-ATPase flippase complex which consists of a catalytic alpha subunit ATP8B2 and an accessory beta subunit TMEM30A or TMEM30B. The cofactor is Mg(2+). As to expression, expressed in brain and testes (at protein level).

It localises to the cell membrane. The protein localises to the endoplasmic reticulum membrane. The enzyme catalyses ATP + H2O + phospholipidSide 1 = ADP + phosphate + phospholipidSide 2.. The catalysed reaction is a 1,2-diacyl-sn-glycero-3-phosphocholine(out) + ATP + H2O = a 1,2-diacyl-sn-glycero-3-phosphocholine(in) + ADP + phosphate + H(+). In terms of biological role, catalytic component of P4-ATPase flippase complex, which catalyzes the hydrolysis of ATP coupled to the transport of phosphatidylcholine (PC) from the outer to the inner leaflet of the plasma membrane. May contribute to the maintenance of membrane lipid asymmetry. In Mus musculus (Mouse), this protein is Phospholipid-transporting ATPase ID.